A 208-amino-acid chain; its full sequence is Large ribosomal subunit protein bL25 (208 aa).

Positions 186-201 (PAGEKSAAAEEGAAAA) are enriched in low complexity. Positions 186 to 208 (PAGEKSAAAEEGAAAAGEDKPAA) are disordered.

This sequence belongs to the bacterial ribosomal protein bL25 family. CTC subfamily. In terms of assembly, part of the 50S ribosomal subunit; part of the 5S rRNA/L5/L18/L25 subcomplex. Contacts the 5S rRNA. Binds to the 5S rRNA independently of L5 and L18.

Functionally, this is one of the proteins that binds to the 5S RNA in the ribosome where it forms part of the central protuberance. The sequence is that of Large ribosomal subunit protein bL25 from Ralstonia pickettii (strain 12J).